The chain runs to 687 residues: Translation initiation factor IF-2 (687 aa).

In terms of domain architecture, tr-type G spans K186–K355. Positions G195 to T202 are G1. G195 to T202 contributes to the GTP binding site. Positions G220–H224 are G2. Residues D241–G244 are G3. Residues D241 to H245 and N295 to D298 contribute to the GTP site. Residues N295 to D298 form a G4 region. Positions S331–K333 are G5.

Belongs to the TRAFAC class translation factor GTPase superfamily. Classic translation factor GTPase family. IF-2 subfamily.

Its subcellular location is the cytoplasm. One of the essential components for the initiation of protein synthesis. Protects formylmethionyl-tRNA from spontaneous hydrolysis and promotes its binding to the 30S ribosomal subunits. Also involved in the hydrolysis of GTP during the formation of the 70S ribosomal complex. This is Translation initiation factor IF-2 from Clostridium botulinum (strain Eklund 17B / Type B).